The chain runs to 226 residues: Transcriptional regulatory protein PcoR (226 aa).

Positions 3–117 constitute a Response regulatory domain; sequence RILIVEDEQK…ELVARVRTLL (115 aa). A 4-aspartylphosphate modification is found at Asp52. Residues 125–223 constitute a DNA-binding region (ompR/PhoB-type); the sequence is ATVCTIADMT…VRGAGYVLEI (99 aa).

Post-translationally, phosphorylated by PcoS.

The protein resides in the cytoplasm. Probable member of a two-component regulatory system PcoS/PcoR. May be involved in the activation of copper resistance gene operon pcoABCD by binding to a specific site on the cop operon promoter (copper box). This is Transcriptional regulatory protein PcoR (pcoR) from Escherichia coli.